The chain runs to 586 residues: Ezrin (586 aa).

In terms of domain architecture, FERM spans 2–295 (PKPINVRVTT…GNHELYMRRR (294 aa)). Lys-60 carries the post-translational modification N6-acetyllysine. The [IL]-x-C-x-x-[DE] motif motif lies at 115–120 (IYCPPE). Residue Tyr-146 is modified to Phosphotyrosine; by PDGFR. Positions 244–586 (EIRNISFNDK…KQRIDEFEAM (343 aa)) are interaction with SCYL3. Residues 302–462 (VQQMKAQARE…QDDLVKTKEE (161 aa)) adopt a coiled-coil conformation. Positions 306 to 338 (KAQAREEKHQKQLERQQLETEKKRRETVEREKE) are disordered. The segment covering 308–338 (QAREEKHQKQLERQQLETEKKRRETVEREKE) has biased composition (basic and acidic residues). At Tyr-354 the chain carries Phosphotyrosine; by PDGFR. Phosphoserine is present on Ser-366. Tyr-478 bears the Phosphotyrosine mark. Residues 534–565 (LSNELSQARDENKRTHNDIIHNENMRQGRDKY) form a disordered region. A Phosphoserine modification is found at Ser-535. Positions 540-565 (QARDENKRTHNDIIHNENMRQGRDKY) are enriched in basic and acidic residues. Position 567 is a phosphothreonine; by ROCK2 and PKC/PRKCI (Thr-567).

Interacts with PALS1 and NHERF2. Found in a complex with EZR, PODXL and NHERF2. Interacts with MCC, PLEKHG6, PODXL, SCYL3/PACE1, NHERF1 and TMEM8B. Interacts (when phosphorylated) with FES/FPS. Interacts with dimeric S100P, the interaction may be activating through unmasking of F-actin binding sites. Identified in complexes that contain VIM, EZR, AHNAK, BFSP1, BFSP2, ANK2, PLEC, PRX and spectrin. Detected in a complex composed of at least EZR, AHNAK, PPL and PRX. Interacts with PDPN (via cytoplasmic domain); activates RHOA and promotes epithelial-mesenchymal transition. Interacts with SPN/CD43 cytoplasmic tail. Interacts with CD44 and ICAM2. Interacts with SLC9A3; interaction targets SLC9A3 to the apical membrane. Interacts with SLC9A1; regulates interactions of SLC9A1 with cytoskeletal and promotes stress fiber formation. Interacts with CLIC5; may work together in a complex which also includes RDX and MYO6 to stabilize linkages between the plasma membrane and subjacent actin cytoskeleton at the base of stereocilia. Phosphorylated by tyrosine-protein kinases. Phosphorylation by ROCK2 suppresses the head-to-tail association of the N-terminal and C-terminal halves resulting in an opened conformation which is capable of actin and membrane-binding. Post-translationally, S-nitrosylation is induced by interferon-gamma and oxidatively-modified low-densitity lipoprotein (LDL(ox)) possibly implicating the iNOS-S100A8/9 transnitrosylase complex. In terms of tissue distribution, detected in eye lens fiber cells. Expressed in cerebrum and cerebellum (at protein level). Component of the microvilli of intestinal epithelial cells.

It localises to the apical cell membrane. The protein localises to the cell projection. Its subcellular location is the microvillus membrane. The protein resides in the ruffle membrane. It is found in the cytoplasm. It localises to the cell cortex. The protein localises to the cytoskeleton. Its subcellular location is the microvillus. A head-to-tail association, of the N-terminal and C-terminal halves results in a closed conformation (inactive form) which is incapable of actin or membrane-binding. Its function is as follows. Probably involved in connections of major cytoskeletal structures to the plasma membrane. In epithelial cells, required for the formation of microvilli and membrane ruffles on the apical pole. Along with PLEKHG6, required for normal macropinocytosis. The sequence is that of Ezrin (Ezr) from Mus musculus (Mouse).